Consider the following 347-residue polypeptide: Haptoglobin (347 aa).

The first 18 residues, 1 to 18 (MSALGAVIALLLWGQLFA), serve as a signal peptide directing secretion. The region spanning 31–88 (DGCPKPPEIANGYVEHLVRYQCKKYYRLRTEGDGVYTLNNEKQWTNKAVGDKLPECEA) is the Sushi domain. Disulfide bonds link Cys-52–Cys-86, Cys-90–Cys-207, Cys-250–Cys-281, and Cys-292–Cys-322. Residues 103 to 345 (ILGGHLDAKG…IQDWVQKTIA (243 aa)) form the Peptidase S1 domain. N-linked (GlcNAc...) asparagine glycosylation is found at Asn-125, Asn-148, Asn-152, and Asn-182. The segment at 259–264 (VPEKKT) is interaction with CD163.

It belongs to the peptidase S1 family. Tetramer of two alpha and two beta chains; disulfide-linked. The hemoglobin/haptoglobin complex is composed of a haptoglobin dimer bound to two hemoglobin alpha-beta dimers. Interacts with CD163. Interacts with ERGIC3. In terms of tissue distribution, expressed by the liver and secreted in plasma.

It localises to the secreted. As a result of hemolysis, hemoglobin is found to accumulate in the kidney and is secreted in the urine. Haptoglobin captures, and combines with free plasma hemoglobin to allow hepatic recycling of heme iron and to prevent kidney damage. Haptoglobin also acts as an antioxidant, has antibacterial activity and plays a role in modulating many aspects of the acute phase response. Hemoglobin/haptoglobin complexes are rapidly cleared by the macrophage CD163 scavenger receptor expressed on the surface of liver Kupfer cells through an endocytic lysosomal degradation pathway. This is Haptoglobin (HP) from Ateles geoffroyi (Black-handed spider monkey).